The chain runs to 377 residues: Nitric oxide reductase FlRd-NAD(+) reductase (377 aa).

Belongs to the FAD-dependent oxidoreductase family. FAD serves as cofactor.

It localises to the cytoplasm. The enzyme catalyses 2 reduced [nitric oxide reductase rubredoxin domain] + NAD(+) + H(+) = 2 oxidized [nitric oxide reductase rubredoxin domain] + NADH. It participates in nitrogen metabolism; nitric oxide reduction. Functionally, one of at least two accessory proteins for anaerobic nitric oxide (NO) reductase. Reduces the rubredoxin moiety of NO reductase. The polypeptide is Nitric oxide reductase FlRd-NAD(+) reductase (Escherichia coli (strain SMS-3-5 / SECEC)).